Reading from the N-terminus, the 2758-residue chain is Highly reducing polyketide synthase NEC1 (2758 aa).

The 340-residue stretch at 153–492 folds into the Ketosynthase family 3 (KS3) domain; sequence EASSPIIGLD…GSNAHVVMDD (340 aa). Residues 512-576 are disordered; sequence PRLPGSSSSR…NTDTLQTTDT (65 aa). Residues 566–576 are compositionally biased toward low complexity; sequence TNTDTLQTTDT. Positions 700–1044 are malonyl-CoA:ACP transacylase (MAT) domain; it reads VFTGQGAQWP…GYATVLKRGD (345 aa). Serine 790 serves as the catalytic For malonyltransferase activity. An N-terminal hotdog fold region spans residues 1124 to 1255; sequence HELLGAPVPD…GFVRTEYSQT (132 aa). A dehydratase (DH) domain region spans residues 1124 to 1442; that stretch reads HELLGAPVPD…VFKTIPNTAS (319 aa). A PKS/mFAS DH domain is found at 1124–1443; the sequence is HELLGAPVPD…FKTIPNTASS (320 aa). Histidine 1156 acts as the Proton acceptor; for dehydratase activity in catalysis. The C-terminal hotdog fold stretch occupies residues 1283-1443; sequence TSMVHADKVY…FKTIPNTASS (161 aa). The active-site Proton donor; for dehydratase activity is the aspartate 1351. The methyltransferase (CMet) domain stretch occupies residues 1622 to 1727; it reads LEVGGGTGGA…RKLLKPGGKL (106 aa). Residues 2031–2344 are enoyl reductase (ER) domain; sequence GTADVCFSED…LGKGEDAVVL (314 aa). The interval 2372–2553 is ketoreductase (KR) domain; it reads ASYMVVGGLG…PVAVSLDLPV (182 aa). The Carrier domain occupies 2673 to 2750; the sequence is EAQAVVLDAL…ALAAAVAGRS (78 aa). Serine 2710 is subject to O-(pantetheine 4'-phosphoryl)serine.

Highly reducing polyketide synthase; part of the gene cluster that mediates the biosynthesis of nectriapyrone and its analogs phomopyrone A, acropyrone and zaepyrone. The nectriapyrone biosynthetic gene cluster consists of two genes, the highly reducing polyketide synthase NEC1 that produces a demethylated analog of nectriapyrone from one unit of acetyl-CoA and one unit of malonyl-CoA; and the O-methyltransferase NEC2 that further methylates the NEC1 product to yield nectriapyrone. Nectriapyrone is further hydrolyzed to nectriapyrone D, also known as gulypyrone B, by an unidentified hydrolase localized outside the nectriapyrone cluster. In Pyricularia oryzae (strain 70-15 / ATCC MYA-4617 / FGSC 8958) (Rice blast fungus), this protein is Highly reducing polyketide synthase NEC1.